A 121-amino-acid chain; its full sequence is Large ribosomal subunit protein bL12 (121 aa).

It belongs to the bacterial ribosomal protein bL12 family. Homodimer. Part of the ribosomal stalk of the 50S ribosomal subunit. Forms a multimeric L10(L12)X complex, where L10 forms an elongated spine to which 2 to 4 L12 dimers bind in a sequential fashion. Binds GTP-bound translation factors.

Forms part of the ribosomal stalk which helps the ribosome interact with GTP-bound translation factors. Is thus essential for accurate translation. This chain is Large ribosomal subunit protein bL12, found in Ureaplasma urealyticum serovar 10 (strain ATCC 33699 / Western).